The following is a 350-amino-acid chain: Putative isomerase YbhH (350 aa).

The protein belongs to the PrpF family.

This chain is Putative isomerase YbhH (ybhH), found in Escherichia coli O6:H1 (strain CFT073 / ATCC 700928 / UPEC).